A 304-amino-acid polypeptide reads, in one-letter code: Pyridoxal 5'-phosphate synthase subunit pyroA (304 aa).

A D-ribose 5-phosphate-binding site is contributed by aspartate 28. Catalysis depends on lysine 85, which acts as the Schiff-base intermediate with D-ribose 5-phosphate. Residue glycine 157 participates in D-ribose 5-phosphate binding. D-glyceraldehyde 3-phosphate is bound at residue arginine 169. Residues glycine 224 and 245-246 (GS) each bind D-ribose 5-phosphate.

Belongs to the PdxS/SNZ family.

The enzyme catalyses aldehydo-D-ribose 5-phosphate + D-glyceraldehyde 3-phosphate + L-glutamine = pyridoxal 5'-phosphate + L-glutamate + phosphate + 3 H2O + H(+). It participates in cofactor biosynthesis; pyridoxal 5'-phosphate biosynthesis. Functionally, catalyzes the formation of pyridoxal 5'-phosphate from ribose 5-phosphate (RBP), glyceraldehyde 3-phosphate (G3P) and ammonia. The ammonia is provided by PDX2. Can also use ribulose 5-phosphate and dihydroxyacetone phosphate as substrates, resulting from enzyme-catalyzed isomerization of RBP and G3P, respectively. Also plays an indirect role in resistance to singlet oxygen-generating photosensitizers. The chain is Pyridoxal 5'-phosphate synthase subunit pyroA (pyroA) from Emericella nidulans (strain FGSC A4 / ATCC 38163 / CBS 112.46 / NRRL 194 / M139) (Aspergillus nidulans).